The chain runs to 590 residues: Acetolactate synthase large subunit (590 aa).

Residue Glu61 participates in thiamine diphosphate binding. FAD is bound by residues Arg163, 271-292, and 314-333; these read HGTAYANFAVSECDLLIALGAR and DIDPAEVGKNRIPQVAIVGD. The thiamine pyrophosphate binding stretch occupies residues 405–484; that stretch reads QHQMWSAQFL…VKIIIINNRW (80 aa). Mg(2+)-binding residues include Asp455 and Asn482.

Belongs to the TPP enzyme family. In terms of assembly, dimer of large and small chains. It depends on Mg(2+) as a cofactor. Thiamine diphosphate is required as a cofactor.

It localises to the plastid. Its subcellular location is the chloroplast. It catalyses the reaction 2 pyruvate + H(+) = (2S)-2-acetolactate + CO2. Its pathway is amino-acid biosynthesis; L-isoleucine biosynthesis; L-isoleucine from 2-oxobutanoate: step 1/4. The protein operates within amino-acid biosynthesis; L-valine biosynthesis; L-valine from pyruvate: step 1/4. The chain is Acetolactate synthase large subunit (ilvB) from Pyropia yezoensis (Susabi-nori).